The sequence spans 92 residues: Small ribosomal subunit protein uS19 (92 aa).

It belongs to the universal ribosomal protein uS19 family.

In terms of biological role, protein S19 forms a complex with S13 that binds strongly to the 16S ribosomal RNA. This chain is Small ribosomal subunit protein uS19, found in Exiguobacterium sibiricum (strain DSM 17290 / CCUG 55495 / CIP 109462 / JCM 13490 / 255-15).